We begin with the raw amino-acid sequence, 538 residues long: CTP synthase (538 aa).

The tract at residues 1-266 is amidoligase domain; the sequence is MRTKYIFITG…DQKIVDLLNI (266 aa). Ser-14 contacts CTP. Residue Ser-14 coordinates UTP. ATP contacts are provided by residues 15 to 20 and Asp-72; that span reads SLGKGL. Mg(2+)-binding residues include Asp-72 and Glu-140. Residues 147–149, 187–192, and Lys-223 contribute to the CTP site; these read DIE and KTKPTQ. UTP contacts are provided by residues 187-192 and Lys-223; that span reads KTKPTQ. 239-241 lines the ATP pocket; that stretch reads KDV. One can recognise a Glutamine amidotransferase type-1 domain in the interval 291–533; the sequence is NIAIVGKYVN…IEAALRYRKK (243 aa). An L-glutamine-binding site is contributed by Gly-353. Cys-380 serves as the catalytic Nucleophile; for glutamine hydrolysis. Residues 381-384, Glu-404, and Arg-461 contribute to the L-glutamine site; that span reads LGMQ. Catalysis depends on residues His-506 and Glu-508.

Belongs to the CTP synthase family. As to quaternary structure, homotetramer.

The catalysed reaction is UTP + L-glutamine + ATP + H2O = CTP + L-glutamate + ADP + phosphate + 2 H(+). It carries out the reaction L-glutamine + H2O = L-glutamate + NH4(+). The enzyme catalyses UTP + NH4(+) + ATP = CTP + ADP + phosphate + 2 H(+). The protein operates within pyrimidine metabolism; CTP biosynthesis via de novo pathway; CTP from UDP: step 2/2. Allosterically activated by GTP, when glutamine is the substrate; GTP has no effect on the reaction when ammonia is the substrate. The allosteric effector GTP functions by stabilizing the protein conformation that binds the tetrahedral intermediate(s) formed during glutamine hydrolysis. Inhibited by the product CTP, via allosteric rather than competitive inhibition. Functionally, catalyzes the ATP-dependent amination of UTP to CTP with either L-glutamine or ammonia as the source of nitrogen. Regulates intracellular CTP levels through interactions with the four ribonucleotide triphosphates. This chain is CTP synthase, found in Syntrophus aciditrophicus (strain SB).